The following is a 255-amino-acid chain: Thiazole synthase (255 aa).

Catalysis depends on Lys96, which acts as the Schiff-base intermediate with DXP. 1-deoxy-D-xylulose 5-phosphate is bound by residues Gly157, 183 to 184 (AG), and 205 to 206 (NT).

Belongs to the ThiG family. Homotetramer. Forms heterodimers with either ThiH or ThiS.

Its subcellular location is the cytoplasm. The enzyme catalyses [ThiS sulfur-carrier protein]-C-terminal-Gly-aminoethanethioate + 2-iminoacetate + 1-deoxy-D-xylulose 5-phosphate = [ThiS sulfur-carrier protein]-C-terminal Gly-Gly + 2-[(2R,5Z)-2-carboxy-4-methylthiazol-5(2H)-ylidene]ethyl phosphate + 2 H2O + H(+). It participates in cofactor biosynthesis; thiamine diphosphate biosynthesis. Functionally, catalyzes the rearrangement of 1-deoxy-D-xylulose 5-phosphate (DXP) to produce the thiazole phosphate moiety of thiamine. Sulfur is provided by the thiocarboxylate moiety of the carrier protein ThiS. In vitro, sulfur can be provided by H(2)S. The polypeptide is Thiazole synthase (Bacillus licheniformis (strain ATCC 14580 / DSM 13 / JCM 2505 / CCUG 7422 / NBRC 12200 / NCIMB 9375 / NCTC 10341 / NRRL NRS-1264 / Gibson 46)).